Here is a 146-residue protein sequence, read N- to C-terminus: Cytochrome c-type biogenesis protein CcmE (146 aa).

The Cytoplasmic segment spans residues 1 to 8 (MHPKRKKR). The chain crosses the membrane as a helical; Signal-anchor for type II membrane protein span at residues 9–29 (LLIVLAGLAVVAVASGLILNA). At 30 to 146 (FRSNLVFFHT…IQRAGETVVQ (117 aa)) the chain is on the periplasmic side. His124 and Tyr128 together coordinate heme.

It belongs to the CcmE/CycJ family.

It is found in the cell inner membrane. Its function is as follows. Heme chaperone required for the biogenesis of c-type cytochromes. Transiently binds heme delivered by CcmC and transfers the heme to apo-cytochromes in a process facilitated by CcmF and CcmH. The sequence is that of Cytochrome c-type biogenesis protein CcmE from Laribacter hongkongensis (strain HLHK9).